The sequence spans 428 residues: RUN domain-containing protein 3A (428 aa).

The 131-residue stretch at 52–182 (DDSSEEFINF…IDFSFCLKGE (131 aa)) folds into the RUN domain. Residues 237–314 (ESWRNKCRKM…ELQEQLTSLI (78 aa)) are a coiled coil. The segment at 349–375 (HRGSFPSPEPHISLTTGSQRTERKQNG) is disordered.

The protein belongs to the RUNDC3 family.

The protein is RUN domain-containing protein 3A (rundc3a) of Danio rerio (Zebrafish).